We begin with the raw amino-acid sequence, 359 residues long: Biotin synthase (359 aa).

Residues 47 to 276 (HHGRRVRIHV…EADLRMAGGR (230 aa)) form the Radical SAM core domain. Positions 65, 69, and 72 each coordinate [4Fe-4S] cluster. Cysteine 109, cysteine 141, cysteine 201, and arginine 271 together coordinate [2Fe-2S] cluster. Residues 320–359 (EPVIVEDGPERQTPATADDTPSGDPEAADRRRQPSAGPAG) are disordered.

The protein belongs to the radical SAM superfamily. Biotin synthase family. Homodimer. [4Fe-4S] cluster is required as a cofactor. The cofactor is [2Fe-2S] cluster.

The catalysed reaction is (4R,5S)-dethiobiotin + (sulfur carrier)-SH + 2 reduced [2Fe-2S]-[ferredoxin] + 2 S-adenosyl-L-methionine = (sulfur carrier)-H + biotin + 2 5'-deoxyadenosine + 2 L-methionine + 2 oxidized [2Fe-2S]-[ferredoxin]. Its pathway is cofactor biosynthesis; biotin biosynthesis; biotin from 7,8-diaminononanoate: step 2/2. Functionally, catalyzes the conversion of dethiobiotin (DTB) to biotin by the insertion of a sulfur atom into dethiobiotin via a radical-based mechanism. The sequence is that of Biotin synthase from Salinibacter ruber (strain DSM 13855 / M31).